Reading from the N-terminus, the 447-residue chain is NADH-ubiquinone oxidoreductase chain 4 (447 aa).

13 consecutive transmembrane segments (helical) span residues isoleucine 28–isoleucine 48, methionine 56–serine 76, phenylalanine 89–valine 109, phenylalanine 110–tryptophan 130, valine 141–isoleucine 161, leucine 183–leucine 203, proline 213–leucine 233, tyrosine 246–leucine 266, alanine 273–methionine 293, leucine 298–leucine 318, leucine 331–leucine 351, isoleucine 374–alanine 394, and tyrosine 409–leucine 431.

This sequence belongs to the complex I subunit 4 family.

Its subcellular location is the mitochondrion membrane. It carries out the reaction a ubiquinone + NADH + 5 H(+)(in) = a ubiquinol + NAD(+) + 4 H(+)(out). Core subunit of the mitochondrial membrane respiratory chain NADH dehydrogenase (Complex I) that is believed to belong to the minimal assembly required for catalysis. Complex I functions in the transfer of electrons from NADH to the respiratory chain. The immediate electron acceptor for the enzyme is believed to be ubiquinone. In Anopheles gambiae (African malaria mosquito), this protein is NADH-ubiquinone oxidoreductase chain 4 (mt:ND4).